Here is a 513-residue protein sequence, read N- to C-terminus: Catalase (513 aa).

Residues 1–30 (MNPSLNAFRPGRLLVAASLTASLLSLSVQA) form the signal peptide. Residues H81 and N153 contribute to the active site. Y361 contributes to the heme binding site. Polar residues predominate over residues 391 to 407 (DGALNAGHSTSGVNYQP). The tract at residues 391 to 413 (DGALNAGHSTSGVNYQPSRLDPR) is disordered.

This sequence belongs to the catalase family. The cofactor is heme.

The protein resides in the periplasm. The catalysed reaction is 2 H2O2 = O2 + 2 H2O. Decomposes hydrogen peroxide into water and oxygen; serves to protect cells from the toxic effects of hydrogen peroxide. This chain is Catalase (katB), found in Pseudomonas aeruginosa (strain ATCC 15692 / DSM 22644 / CIP 104116 / JCM 14847 / LMG 12228 / 1C / PRS 101 / PAO1).